We begin with the raw amino-acid sequence, 428 residues long: 3-phosphoshikimate 1-carboxyvinyltransferase (428 aa).

3-phosphoshikimate contacts are provided by Lys-23, Ser-24, and Arg-28. Lys-23 serves as a coordination point for phosphoenolpyruvate. Phosphoenolpyruvate contacts are provided by Gly-97 and Arg-125. Residues Ser-170, Ser-171, Gln-172, Ser-198, Asp-314, Asn-337, and Lys-341 each contribute to the 3-phosphoshikimate site. Gln-172 provides a ligand contact to phosphoenolpyruvate. Residue Asp-314 is the Proton acceptor of the active site. Arg-345, Arg-387, and Lys-412 together coordinate phosphoenolpyruvate.

It belongs to the EPSP synthase family. Monomer.

It localises to the cytoplasm. The enzyme catalyses 3-phosphoshikimate + phosphoenolpyruvate = 5-O-(1-carboxyvinyl)-3-phosphoshikimate + phosphate. It functions in the pathway metabolic intermediate biosynthesis; chorismate biosynthesis; chorismate from D-erythrose 4-phosphate and phosphoenolpyruvate: step 6/7. Functionally, catalyzes the transfer of the enolpyruvyl moiety of phosphoenolpyruvate (PEP) to the 5-hydroxyl of shikimate-3-phosphate (S3P) to produce enolpyruvyl shikimate-3-phosphate and inorganic phosphate. In Hamiltonella defensa subsp. Acyrthosiphon pisum (strain 5AT), this protein is 3-phosphoshikimate 1-carboxyvinyltransferase.